A 453-amino-acid polypeptide reads, in one-letter code: Bifunctional protein GlmU (453 aa).

Residues 1 to 225 form a pyrophosphorylase region; the sequence is MNIVILAAGT…GWETLGVNSK (225 aa). UDP-N-acetyl-alpha-D-glucosamine-binding positions include 6–9, K20, Q71, 76–77, 98–100, G135, E150, N165, and N223; these read LAAG, GT, and YGD. D100 provides a ligand contact to Mg(2+). Residue N223 participates in Mg(2+) binding. The linker stretch occupies residues 226 to 246; the sequence is AQLAELERIHQRNLADALLAA. The tract at residues 247–453 is N-acetyltransferase; the sequence is GVTLADPARI…GYVRPVKKKS (207 aa). UDP-N-acetyl-alpha-D-glucosamine-binding residues include R329 and K347. Catalysis depends on H359, which acts as the Proton acceptor. Y362 and N373 together coordinate UDP-N-acetyl-alpha-D-glucosamine. Residues A376, 382–383, S401, and A419 each bind acetyl-CoA; that span reads NY.

The protein in the N-terminal section; belongs to the N-acetylglucosamine-1-phosphate uridyltransferase family. In the C-terminal section; belongs to the transferase hexapeptide repeat family. As to quaternary structure, homotrimer. Mg(2+) is required as a cofactor.

The protein localises to the cytoplasm. The catalysed reaction is alpha-D-glucosamine 1-phosphate + acetyl-CoA = N-acetyl-alpha-D-glucosamine 1-phosphate + CoA + H(+). It carries out the reaction N-acetyl-alpha-D-glucosamine 1-phosphate + UTP + H(+) = UDP-N-acetyl-alpha-D-glucosamine + diphosphate. It participates in nucleotide-sugar biosynthesis; UDP-N-acetyl-alpha-D-glucosamine biosynthesis; N-acetyl-alpha-D-glucosamine 1-phosphate from alpha-D-glucosamine 6-phosphate (route II): step 2/2. It functions in the pathway nucleotide-sugar biosynthesis; UDP-N-acetyl-alpha-D-glucosamine biosynthesis; UDP-N-acetyl-alpha-D-glucosamine from N-acetyl-alpha-D-glucosamine 1-phosphate: step 1/1. Its pathway is bacterial outer membrane biogenesis; LPS lipid A biosynthesis. Its function is as follows. Catalyzes the last two sequential reactions in the de novo biosynthetic pathway for UDP-N-acetylglucosamine (UDP-GlcNAc). The C-terminal domain catalyzes the transfer of acetyl group from acetyl coenzyme A to glucosamine-1-phosphate (GlcN-1-P) to produce N-acetylglucosamine-1-phosphate (GlcNAc-1-P), which is converted into UDP-GlcNAc by the transfer of uridine 5-monophosphate (from uridine 5-triphosphate), a reaction catalyzed by the N-terminal domain. This is Bifunctional protein GlmU from Burkholderia pseudomallei (strain K96243).